The primary structure comprises 65 residues: Large ribosomal subunit protein uL29 (65 aa).

The interval 30-49 (ERSSVAMGGAPSSPGKMRSI) is disordered.

This sequence belongs to the universal ribosomal protein uL29 family.

The chain is Large ribosomal subunit protein uL29 from Picrophilus torridus (strain ATCC 700027 / DSM 9790 / JCM 10055 / NBRC 100828 / KAW 2/3).